A 141-amino-acid polypeptide reads, in one-letter code: Hemoglobin subunit alpha-1 (141 aa).

Positions 1-141 (VLSPADKNNV…VSTVLTSKYR (141 aa)) constitute a Globin domain. Histidine 58 is an O2 binding site. A heme b-binding site is contributed by histidine 87.

This sequence belongs to the globin family. Heterotetramer of two alpha chains and two beta chains. As to expression, red blood cells.

Functionally, involved in oxygen transport from the lung to the various peripheral tissues. This Varecia variegata (Black-and-white ruffed lemur) protein is Hemoglobin subunit alpha-1.